We begin with the raw amino-acid sequence, 196 residues long: Imidazole glycerol phosphate synthase subunit HisH (196 aa).

Residues 2–196 form the Glutamine amidotransferase type-1 domain; sequence KVVILDTGCA…AQLLKNFLEM (195 aa). Cys-77 acts as the Nucleophile in catalysis. Catalysis depends on residues His-178 and Glu-180.

As to quaternary structure, heterodimer of HisH and HisF.

It localises to the cytoplasm. The catalysed reaction is 5-[(5-phospho-1-deoxy-D-ribulos-1-ylimino)methylamino]-1-(5-phospho-beta-D-ribosyl)imidazole-4-carboxamide + L-glutamine = D-erythro-1-(imidazol-4-yl)glycerol 3-phosphate + 5-amino-1-(5-phospho-beta-D-ribosyl)imidazole-4-carboxamide + L-glutamate + H(+). The enzyme catalyses L-glutamine + H2O = L-glutamate + NH4(+). Its pathway is amino-acid biosynthesis; L-histidine biosynthesis; L-histidine from 5-phospho-alpha-D-ribose 1-diphosphate: step 5/9. IGPS catalyzes the conversion of PRFAR and glutamine to IGP, AICAR and glutamate. The HisH subunit catalyzes the hydrolysis of glutamine to glutamate and ammonia as part of the synthesis of IGP and AICAR. The resulting ammonia molecule is channeled to the active site of HisF. This chain is Imidazole glycerol phosphate synthase subunit HisH, found in Pectobacterium atrosepticum (strain SCRI 1043 / ATCC BAA-672) (Erwinia carotovora subsp. atroseptica).